Consider the following 267-residue polypeptide: Hydroxyethylthiazole kinase (267 aa).

Met46 is a binding site for substrate. The ATP site is built by Arg122 and Ser168. A substrate-binding site is contributed by Gly195.

The protein belongs to the Thz kinase family. The cofactor is Mg(2+).

The enzyme catalyses 5-(2-hydroxyethyl)-4-methylthiazole + ATP = 4-methyl-5-(2-phosphooxyethyl)-thiazole + ADP + H(+). Its pathway is cofactor biosynthesis; thiamine diphosphate biosynthesis; 4-methyl-5-(2-phosphoethyl)-thiazole from 5-(2-hydroxyethyl)-4-methylthiazole: step 1/1. In terms of biological role, catalyzes the phosphorylation of the hydroxyl group of 4-methyl-5-beta-hydroxyethylthiazole (THZ). The protein is Hydroxyethylthiazole kinase of Nitratidesulfovibrio vulgaris (strain DP4) (Desulfovibrio vulgaris).